The primary structure comprises 278 residues: 2,5-diketo-D-gluconic acid reductase A (278 aa).

Y50 functions as the Proton donor in the catalytic mechanism. H108 lines the substrate pocket. 188–242 (GPLGQGKYDLFGAEPVTAAAAAHGKTPAQAVLRWHLQKGFVVFPKSVRRERLEEN) contacts NADP(+). Residues 259-278 (DAMDPGDGSGRVSAHPDEVD) form a disordered region.

This sequence belongs to the aldo/keto reductase family. In terms of assembly, monomer.

It is found in the cytoplasm. It catalyses the reaction 2-dehydro-L-idonate + NADP(+) = 2,5-didehydro-D-gluconate + NADPH + H(+). With respect to regulation, inhibited by Zn(2+), Fe(3+), Cu(2+) and Ni(2+). Catalyzes the reduction of 2,5-diketo-D-gluconic acid (25DKG) to 2-keto-L-gulonic acid (2KLG). 5-keto-D-fructose and dihydroxyacetone can also serve as substrates. 25DKGR-A exhibits a greater selectivity for the substrate and higher thermal stability than 25DKGR-B. The polypeptide is 2,5-diketo-D-gluconic acid reductase A (dkgA) (Corynebacterium sp. (strain ATCC 31090)).